We begin with the raw amino-acid sequence, 249 residues long: Fasciclin-like arabinogalactan protein 12 (249 aa).

A signal peptide spans 1 to 24 (MEHSLIILLFTVLLLLTTTPGILS). Positions 37–181 (PTNVTKILEK…LAVYQVDKVL (145 aa)) constitute an FAS1 domain. Asn39, Asn71, Asn143, Asn152, and Asn159 each carry an N-linked (GlcNAc...) asparagine glycan. The segment at 186–219 (VFDPRPPAPAPAPSVSKSKKKKDDSDSSSDDSPA) is disordered. Asp220 carries the GPI-anchor amidated aspartate lipid modification. The propeptide at 221-249 (ASFALRNVGSVCDAVSFCVMSVMLAWFYL) is removed in mature form.

This sequence belongs to the fasciclin-like AGP family.

The protein resides in the cell membrane. In terms of biological role, may be a cell surface adhesion protein. The protein is Fasciclin-like arabinogalactan protein 12 (FLA12) of Arabidopsis thaliana (Mouse-ear cress).